Here is a 29-residue protein sequence, read N- to C-terminus: Dermaseptin-J9 (29 aa).

As to expression, expressed by the skin glands.

It is found in the secreted. Functionally, has antimicrobial activity. The sequence is that of Dermaseptin-J9 from Phasmahyla jandaia (Jandaia leaf frog).